The primary structure comprises 201 residues: Thymidylate kinase (201 aa).

Position 7–14 (7–14 (GIDGSGKS)) interacts with ATP.

The protein belongs to the thymidylate kinase family.

It carries out the reaction dTMP + ATP = dTDP + ADP. Functionally, phosphorylation of dTMP to form dTDP in both de novo and salvage pathways of dTTP synthesis. The protein is Thymidylate kinase of Thermosipho africanus (strain TCF52B).